The following is a 78-amino-acid chain: Sec-independent protein translocase protein TatA (78 aa).

Residues 1-21 form a helical membrane-spanning segment; sequence MGSLSIWHWIVVIGVVLLLFG. The span at 42–60 shows a compositional bias: basic and acidic residues; that stretch reads GLQDDEKTAEKPEPVKSID. The segment at 42–78 is disordered; it reads GLQDDEKTAEKPEPVKSIDHTAPPAAAPRTDVGSKVV.

This sequence belongs to the TatA/E family. As to quaternary structure, the Tat system comprises two distinct complexes: a TatABC complex, containing multiple copies of TatA, TatB and TatC subunits, and a separate TatA complex, containing only TatA subunits. Substrates initially bind to the TatABC complex, which probably triggers association of the separate TatA complex to form the active translocon.

Its subcellular location is the cell inner membrane. Part of the twin-arginine translocation (Tat) system that transports large folded proteins containing a characteristic twin-arginine motif in their signal peptide across membranes. TatA could form the protein-conducting channel of the Tat system. This chain is Sec-independent protein translocase protein TatA, found in Rhodopseudomonas palustris (strain BisB18).